A 301-amino-acid polypeptide reads, in one-letter code: Oxygen-dependent coproporphyrinogen-III oxidase (301 aa).

Position 92 (S92) interacts with substrate. The a divalent metal cation site is built by H96 and H106. The Proton donor role is filled by H106. 108–110 (NVR) contributes to the substrate binding site. Residues H145 and H175 each contribute to the a divalent metal cation site. The segment at 240–275 (YVEFNLVWDRGTLFGLQTGGRTESILMSMPPLVRWE) is important for dimerization. Substrate is bound at residue 258–260 (GGR).

This sequence belongs to the aerobic coproporphyrinogen-III oxidase family. Homodimer. A divalent metal cation is required as a cofactor.

Its subcellular location is the cytoplasm. The catalysed reaction is coproporphyrinogen III + O2 + 2 H(+) = protoporphyrinogen IX + 2 CO2 + 2 H2O. Its pathway is porphyrin-containing compound metabolism; protoporphyrin-IX biosynthesis; protoporphyrinogen-IX from coproporphyrinogen-III (O2 route): step 1/1. Functionally, involved in the heme biosynthesis. Catalyzes the aerobic oxidative decarboxylation of propionate groups of rings A and B of coproporphyrinogen-III to yield the vinyl groups in protoporphyrinogen-IX. The protein is Oxygen-dependent coproporphyrinogen-III oxidase of Cronobacter sakazakii (strain ATCC BAA-894) (Enterobacter sakazakii).